The primary structure comprises 23 residues: uncharacterized protein (23 aa).

It is found in the plastid. The protein localises to the chloroplast. This is an uncharacterized protein from Zea mays (Maize).